Consider the following 610-residue polypeptide: ATP-dependent zinc metalloprotease FtsH (610 aa).

The Cytoplasmic portion of the chain corresponds to 1–3 (MAK). Residues 4 to 24 (NLMLWLVIAVVLMSIFQNFSA) form a helical membrane-spanning segment. The Extracellular portion of the chain corresponds to 25 to 97 (NNINNRKIDY…IIGAAPEEQS (73 aa)). Residues 98-118 (FFTAIFISWFPMLLLIGVWVF) traverse the membrane as a helical segment. At 119–610 (FMRQMQVGGG…SNICTDDDNN (492 aa)) the chain is on the cytoplasmic side. Residue 192–199 (GPPGTGKT) coordinates ATP. Residue His414 coordinates Zn(2+). Glu415 is a catalytic residue. Zn(2+) contacts are provided by His418 and Asp492.

It in the central section; belongs to the AAA ATPase family. The protein in the C-terminal section; belongs to the peptidase M41 family. As to quaternary structure, homohexamer. It depends on Zn(2+) as a cofactor.

The protein localises to the cell membrane. Acts as a processive, ATP-dependent zinc metallopeptidase for both cytoplasmic and membrane proteins. Plays a role in the quality control of integral membrane proteins. The polypeptide is ATP-dependent zinc metalloprotease FtsH (Buchnera aphidicola subsp. Baizongia pistaciae (strain Bp)).